We begin with the raw amino-acid sequence, 80 residues long: Kappa-actitoxin-Avd4i (80 aa).

The N-terminal stretch at 1 to 19 (MNKALFLCLVVLCAAVVFA) is a signal peptide. Positions 20–31 (AEDLQKAKHAPF) are excised as a propeptide. Cystine bridges form between Cys-41–Cys-76, Cys-43–Cys-69, and Cys-59–Cys-77.

This sequence belongs to the sea anemone type 3 (BDS) potassium channel toxin family. As to expression, weakly expressed in the ectodermal tissue from the distal and proximal tentacles, body wall, and oral disk.

The protein localises to the secreted. It is found in the nematocyst. Functionally, blocks Kv3 voltage-gated potassium channels. Reduces blood pressure. The polypeptide is Kappa-actitoxin-Avd4i (Anemonia viridis (Snakelocks anemone)).